We begin with the raw amino-acid sequence, 609 residues long: Non-structural glycoprotein (609 aa).

Positions 1 to 24 (MDFLRQCTLIQVMILAITIRLTHG) are cleaved as a signal peptide. Topologically, residues 25–581 (GWTNFPESCV…EKDYWHEEYN (557 aa)) are extracellular. Asn-87, Asn-375, Asn-465, Asn-472, Asn-478, Asn-506, Asn-529, Asn-551, and Asn-562 each carry an N-linked (GlcNAc...) asparagine; by host glycan. A helical transmembrane segment spans residues 582–599 (MWGLSGLSFLLLLALFYN). Over 600-609 (KIKRKIKRKS) the chain is Cytoplasmic.

This sequence belongs to the ephemerovirus glycoprotein family.

It localises to the membrane. The protein is Non-structural glycoprotein (GNS) of Adelaide River virus (ARV).